The sequence spans 115 residues: Toxin-like structure LSTX-D1 (115 aa).

The first 22 residues, 1–22 (MKVLVLFSVLFLTLFSYSSTEA), serve as a signal peptide directing secretion. Positions 23–44 (IDEFDSDAEEDMLSLMANEQVR) are excised as a propeptide. 4 cysteine pairs are disulfide-bonded: cysteine 48/cysteine 63, cysteine 55/cysteine 72, cysteine 62/cysteine 87, and cysteine 74/cysteine 85.

This sequence belongs to the neurotoxin 19 (CSTX) family. 01 subfamily. As to expression, expressed by the venom gland.

It is found in the secreted. The chain is Toxin-like structure LSTX-D1 from Lycosa singoriensis (Wolf spider).